A 438-amino-acid polypeptide reads, in one-letter code: V-type ATP synthase beta chain (438 aa).

This sequence belongs to the ATPase alpha/beta chains family.

Produces ATP from ADP in the presence of a proton gradient across the membrane. The V-type beta chain is a regulatory subunit. This Chlamydia muridarum (strain MoPn / Nigg) protein is V-type ATP synthase beta chain (atpB).